A 463-amino-acid chain; its full sequence is Fumarate hydratase class II (463 aa).

Residues 98 to 100 (SGT), 129 to 132 (HPND), 139 to 141 (SSN), and threonine 187 contribute to the substrate site. Catalysis depends on histidine 188, which acts as the Proton donor/acceptor. The active site involves serine 318. Substrate is bound by residues serine 319 and 324 to 326 (KVN).

It belongs to the class-II fumarase/aspartase family. Fumarase subfamily. In terms of assembly, homotetramer.

It localises to the cytoplasm. It carries out the reaction (S)-malate = fumarate + H2O. The protein operates within carbohydrate metabolism; tricarboxylic acid cycle; (S)-malate from fumarate: step 1/1. Functionally, involved in the TCA cycle. Catalyzes the stereospecific interconversion of fumarate to L-malate. The chain is Fumarate hydratase class II from Caulobacter vibrioides (strain ATCC 19089 / CIP 103742 / CB 15) (Caulobacter crescentus).